The following is a 354-amino-acid chain: Uroporphyrinogen decarboxylase (354 aa).

Substrate contacts are provided by residues 27–31, D77, Y154, T209, and H327; that span reads RQAGR.

The protein belongs to the uroporphyrinogen decarboxylase family. Homodimer.

It is found in the cytoplasm. The enzyme catalyses uroporphyrinogen III + 4 H(+) = coproporphyrinogen III + 4 CO2. It functions in the pathway porphyrin-containing compound metabolism; protoporphyrin-IX biosynthesis; coproporphyrinogen-III from 5-aminolevulinate: step 4/4. In terms of biological role, catalyzes the decarboxylation of four acetate groups of uroporphyrinogen-III to yield coproporphyrinogen-III. The chain is Uroporphyrinogen decarboxylase from Pseudomonas entomophila (strain L48).